An 874-amino-acid chain; its full sequence is Mannuronan C5-epimerase AlgE6 (874 aa).

PbH1 repeat units lie at residues 133-155 (DRNV…DPHE), 157-179 (TINL…VADY), 180-202 (QIGG…NIVT), 204-226 (TNDF…VVQR), 234-256 (PENI…LVKM), 257-279 (SNNV…RVYG), 280-302 (AQGV…APEV), and 320-351 (TLNT…DFSS). 7 Hemolysin-type calcium-binding repeats span residues 383–394 (GTDGNDVLIGSD), 401–417 (GGAG…DDLL), 419–435 (GGAG…ADTF), 562–578 (GGGG…GDLL), 580–596 (GGAG…ADTF), 723–739 (GGGG…NDLL), and 741–757 (GGAG…ADTF). Positions 401–420 (GGAGDDRLDGGAGDDLLDGG) are disordered.

This sequence belongs to the D-mannuronate C5-epimerase family. Requires Ca(2+) as cofactor.

The protein resides in the secreted. It carries out the reaction [(1-&gt;4)-beta-D-mannuronosyl](n) = [alginate](n). It functions in the pathway glycan biosynthesis; alginate biosynthesis. With respect to regulation, inhibited by zinc. Converts beta-D-mannuronic acid (M) to alpha-L-guluronic acid (G), producing a polymer with gel-forming capacity, required for the formation of the cyst coat. This is Mannuronan C5-epimerase AlgE6 from Azotobacter vinelandii.